We begin with the raw amino-acid sequence, 162 residues long: Large ribosomal subunit protein uL22c (162 aa).

It belongs to the universal ribosomal protein uL22 family. As to quaternary structure, part of the 50S ribosomal subunit.

It is found in the plastid. It localises to the chloroplast. This protein binds specifically to 23S rRNA. In terms of biological role, the globular domain of the protein is located near the polypeptide exit tunnel on the outside of the subunit, while an extended beta-hairpin is found that lines the wall of the exit tunnel in the center of the 70S ribosome. The polypeptide is Large ribosomal subunit protein uL22c (rpl22) (Cucumis sativus (Cucumber)).